The primary structure comprises 368 residues: Terpene cyclase penA (368 aa).

6 helical membrane-spanning segments follow: residues 10–30 (IILASVAIYTKYYLSFQNGFI), 81–101 (LSLYAIAFAGSMIPMWLILLM), 118–138 (LTGLLVQGIGPGVMMCVLLAM), 192–212 (LFIASWQGWPLYIALAVGIAH), 233–253 (FALACSIISHVGLLLISFLSI), and 334–354 (LATMSLAFGPCSVALALYWTA).

This sequence belongs to the membrane-bound ascI terpene cyclase family.

The protein resides in the membrane. It participates in secondary metabolite biosynthesis. Its function is as follows. Part of the gene cluster that mediates the biosynthesis of the indole diterpenes penitrems. The geranylgeranyl diphosphate (GGPP) synthase penG catalyzes the first step in penitrem biosynthesis via conversion of farnesyl pyrophosphate and isopentyl pyrophosphate into geranylgeranyl pyrophosphate (GGPP). Condensation of indole-3-glycerol phosphate with GGPP by the prenyl transferase penC then forms 3-geranylgeranylindole (3-GGI). Epoxidation by the FAD-dependent monooxygenase penM leads to a epoxidized-GGI that is substrate of the terpene cyclase penB for cyclization to yield paspaline. Paspaline is subsequently converted to 13-desoxypaxilline by the cytochrome P450 monooxygenase penP, the latter being then converted to paxilline by the cytochrome P450 monooxygenase penQ. Paxilline is converted to beta-paxitriol via C-10 ketoreduction by the short-chain dehydrogenase PC-15 which can be monoprenylated at the C-20 by the indole diterpene prenyltransferase penD. A two-step elimination (acetylation and elimination) process performed by the O-acetyltransferase PC-16 and the P.simplicissimum ptmI-ortholog not yet identified in P.crustosum, leads to the production of the prenylated form of penijanthine. The FAD-linked oxidoreductase ptmO then converts the prenylated form of penijanthine into PC-M5 which is in turn transformed into PC-M4 by the aromatic dimethylallyltransferase PC-22. A series of oxidation steps involving 4 cytochrome P450 monooxygenases (PC-21, PC-05, PC-23, PC-20) and a FAD-dependent monooxygenase (PC-14) are required for the transformation of PC-M4 to penitrems A and E. Synthesis of these final products is proposed to proceed via penitrems D and C (PC-21, PC-05, PC-14) and penitrems B and F (PC-21, PC-05, PC-14, PC-23). The chain is Terpene cyclase penA from Penicillium crustosum (Blue mold fungus).